The primary structure comprises 499 residues: Bifunctional purine biosynthesis protein PurH (499 aa).

One can recognise an MGS-like domain in the interval 1–144 (MIKRALISVF…KNFKDVVVLT (144 aa)).

The protein belongs to the PurH family.

It carries out the reaction (6R)-10-formyltetrahydrofolate + 5-amino-1-(5-phospho-beta-D-ribosyl)imidazole-4-carboxamide = 5-formamido-1-(5-phospho-D-ribosyl)imidazole-4-carboxamide + (6S)-5,6,7,8-tetrahydrofolate. The catalysed reaction is IMP + H2O = 5-formamido-1-(5-phospho-D-ribosyl)imidazole-4-carboxamide. It functions in the pathway purine metabolism; IMP biosynthesis via de novo pathway; 5-formamido-1-(5-phospho-D-ribosyl)imidazole-4-carboxamide from 5-amino-1-(5-phospho-D-ribosyl)imidazole-4-carboxamide (10-formyl THF route): step 1/1. The protein operates within purine metabolism; IMP biosynthesis via de novo pathway; IMP from 5-formamido-1-(5-phospho-D-ribosyl)imidazole-4-carboxamide: step 1/1. The chain is Bifunctional purine biosynthesis protein PurH from Clostridium botulinum (strain Loch Maree / Type A3).